Consider the following 545-residue polypeptide: Methionine--tRNA ligase (545 aa).

Residues Pro10 to His20 carry the 'HIGH' region motif. Zn(2+) is bound by residues Cys141, Cys144, Cys153, and Cys156. The 'KMSKS' region motif lies at Lys329–Ser333. Thr332 serves as a coordination point for ATP.

Belongs to the class-I aminoacyl-tRNA synthetase family. MetG type 1 subfamily. As to quaternary structure, monomer. It depends on Zn(2+) as a cofactor.

The protein localises to the cytoplasm. The catalysed reaction is tRNA(Met) + L-methionine + ATP = L-methionyl-tRNA(Met) + AMP + diphosphate. In terms of biological role, is required not only for elongation of protein synthesis but also for the initiation of all mRNA translation through initiator tRNA(fMet) aminoacylation. This chain is Methionine--tRNA ligase, found in Streptococcus pneumoniae (strain 70585).